Consider the following 191-residue polypeptide: Ribonuclease HII (191 aa).

The RNase H type-2 domain maps to I7–K191. A divalent metal cation is bound by residues D13, E14, and D103.

This sequence belongs to the RNase HII family. The cofactor is Mn(2+). Mg(2+) serves as cofactor.

It localises to the cytoplasm. The catalysed reaction is Endonucleolytic cleavage to 5'-phosphomonoester.. Functionally, endonuclease that specifically degrades the RNA of RNA-DNA hybrids. The protein is Ribonuclease HII of Legionella pneumophila subsp. pneumophila (strain Philadelphia 1 / ATCC 33152 / DSM 7513).